The sequence spans 211 residues: Large ribosomal subunit protein uL4 (211 aa).

Disordered stretches follow at residues 1–28 (MAQA…ETEP) and 48–99 (TAST…GPRY). Over residues 10–28 (RTGRRSEMELKGPRFETEP) the composition is skewed to basic and acidic residues.

The protein belongs to the universal ribosomal protein uL4 family. As to quaternary structure, part of the 50S ribosomal subunit.

One of the primary rRNA binding proteins, this protein initially binds near the 5'-end of the 23S rRNA. It is important during the early stages of 50S assembly. It makes multiple contacts with different domains of the 23S rRNA in the assembled 50S subunit and ribosome. Functionally, forms part of the polypeptide exit tunnel. The protein is Large ribosomal subunit protein uL4 of Rubrobacter xylanophilus (strain DSM 9941 / JCM 11954 / NBRC 16129 / PRD-1).